The following is a 495-amino-acid chain: Ectonucleoside triphosphate diphosphohydrolase 2 (495 aa).

The Cytoplasmic segment spans residues 2 to 4; the sequence is ARR. A helical transmembrane segment spans residues 5–25; it reads AAAVLLLLALGCLLGILLLCL. At 26–465 the chain is on the extracellular side; the sequence is GSGDARGPPS…SHRSMLYNYW (440 aa). An N-linked (GlcNAc...) asparagine glycan is attached at Asn62. Cysteines 73 and 97 form a disulfide. The active-site Proton acceptor is Glu162. 201–205 serves as a coordination point for ATP; sequence GASTQ. Cystine bridges form between Cys239/Cys286, Cys267/Cys311, Cys324/Cys329, and Cys378/Cys400. Asn297 carries N-linked (GlcNAc...) asparagine glycosylation. N-linked (GlcNAc...) asparagine glycans are attached at residues Asn418 and Asn444. The helical transmembrane segment at 466–486 threads the bilayer; sequence VILILLFVITTLTALLTAVYL. Topologically, residues 487–495 are cytoplasmic; it reads LRRSKSSTI.

The protein belongs to the GDA1/CD39 NTPase family. Requires Ca(2+) as cofactor. Mg(2+) is required as a cofactor.

It localises to the membrane. In terms of biological role, in the nervous system, could hydrolyze ATP and other nucleotides to regulate purinergic neurotransmission. Hydrolyzes ADP only to a marginal extent. The protein is Ectonucleoside triphosphate diphosphohydrolase 2 (ENTPD2) of Gallus gallus (Chicken).